The chain runs to 532 residues: Protein FAM227B (532 aa).

Residues 432–482 adopt a coiled-coil conformation; sequence DNKKDFKRVKQRIKDDIKFLREQQELIDKELDRIQAKASKNLQEVKNEFEN. A disordered region spans residues 494–532; the sequence is KEEYGGSTSASESPQSMQSPQSSSSFPTISEDFNNVEEG. Residues 500–523 show a composition bias toward low complexity; that stretch reads STSASESPQSMQSPQSSSSFPTIS.

The protein belongs to the FAM227 family.

In Mus musculus (Mouse), this protein is Protein FAM227B (Fam227b).